The primary structure comprises 396 residues: Stearoyl-[acyl-carrier-protein] 9-desaturase, chloroplastic (396 aa).

Residues 1-33 (MALKLNPFLSQTQKLPSFALPPMASTRSPKFYM) constitute a chloroplast transit peptide. Fe cation-binding residues include glutamate 138, glutamate 176, histidine 179, glutamate 229, glutamate 262, and histidine 265.

It belongs to the fatty acid desaturase type 2 family. In terms of assembly, homodimer. The cofactor is Fe(2+). Higher levels in developing seeds than in leaf and root tissues.

It is found in the plastid. Its subcellular location is the chloroplast. It carries out the reaction octadecanoyl-[ACP] + 2 reduced [2Fe-2S]-[ferredoxin] + O2 + 2 H(+) = (9Z)-octadecenoyl-[ACP] + 2 oxidized [2Fe-2S]-[ferredoxin] + 2 H2O. Its pathway is lipid metabolism; fatty acid metabolism. In terms of biological role, converts stearoyl-ACP to oleoyl-ACP by introduction of a cis double bond between carbons 9 and 10 of the acyl chain. This chain is Stearoyl-[acyl-carrier-protein] 9-desaturase, chloroplastic, found in Ricinus communis (Castor bean).